The following is a 72-amino-acid chain: UPF0154 protein YneF (72 aa).

A helical membrane pass occupies residues 4–24; it reads WVGILVGVVALLIGVALGFFI.

Belongs to the UPF0154 family.

It is found in the membrane. This Bacillus subtilis (strain 168) protein is UPF0154 protein YneF (yneF).